We begin with the raw amino-acid sequence, 351 residues long: sn-1 oleoyl-lipid 12-desaturase (351 aa).

Transmembrane regions (helical) follow at residues 46 to 66 (WASV…IIYL) and 68 to 88 (WYCL…AFVV). Positions 90–94 (HDCGH) match the Histidine box-1 motif. Residues 102 to 122 (WVNDLVGHIAFAPLIYPFHSW) form a helical membrane-spanning segment. Positions 126 to 130 (HDHHH) match the Histidine box-2 motif. 2 helical membrane-spanning segments follow: residues 199–219 (IAVV…TTGV) and 222–242 (FVKF…TFTI). A Histidine box-3 motif is present at residues 290 to 294 (HHLSV).

It belongs to the fatty acid desaturase type 2 family. Fe(2+) is required as a cofactor.

It localises to the membrane. The enzyme catalyses a 1-[(9Z)-octadecenoyl]-2-acyl-glycerolipid + 2 reduced [2Fe-2S]-[ferredoxin] + O2 + 2 H(+) = a 1-[(9Z,12Z)-octadecdienoyl]-2-acyl-glycerolipid + 2 oxidized [2Fe-2S]-[ferredoxin] + 2 H2O. Its pathway is lipid metabolism; polyunsaturated fatty acid biosynthesis. Its function is as follows. Desaturase involved in fatty acid biosynthesis. Introduces a double bond at carbon 12 of oleoyl groups (18:1) attached to the sn-1 position of the glycerol moiety of membrane glycerolipids. This enzyme is involved in chilling tolerance because the phase transition temperature of lipids of cellular membranes depends on the degree of unsaturation of fatty acids of the membrane lipids. In Synechocystis sp. (strain ATCC 27184 / PCC 6803 / Kazusa), this protein is sn-1 oleoyl-lipid 12-desaturase.